The chain runs to 255 residues: Urease accessory protein UreD 1 (255 aa).

It belongs to the UreD family. UreD, UreF and UreG form a complex that acts as a GTP-hydrolysis-dependent molecular chaperone, activating the urease apoprotein by helping to assemble the nickel containing metallocenter of UreC. The UreE protein probably delivers the nickel.

It localises to the cytoplasm. Its function is as follows. Required for maturation of urease via the functional incorporation of the urease nickel metallocenter. In Streptomyces griseus subsp. griseus (strain JCM 4626 / CBS 651.72 / NBRC 13350 / KCC S-0626 / ISP 5235), this protein is Urease accessory protein UreD 1.